The primary structure comprises 511 residues: Coatomer subunit delta (511 aa).

The span at 168–177 shows a compositional bias: basic and acidic residues; sequence QARRDAERQG. The tract at residues 168–196 is disordered; that stretch reads QARRDAERQGKKAPGFGGFGSSTVSGGST. Ser223 is subject to Phosphoserine. 2 positions are modified to N6-acetyllysine: Lys233 and Lys241. Residue Ser244 is modified to Phosphoserine. The 241-residue stretch at 271–511 folds into the MHD domain; it reads MESVHMKIEE…TFLVDKYEIL (241 aa). An N6-acetyllysine mark is found at Lys309 and Lys351. Position 493 is a phosphoserine (Ser493).

The protein belongs to the adaptor complexes medium subunit family. Delta-COP subfamily. As to quaternary structure, oligomeric complex that consists of at least the alpha, beta, beta', gamma, delta, epsilon and zeta subunits. Ubiquitously expressed.

The protein localises to the cytoplasm. It is found in the golgi apparatus membrane. It localises to the cytoplasmic vesicle. The protein resides in the COPI-coated vesicle membrane. Functionally, the coatomer is a cytosolic protein complex that binds to dilysine motifs and reversibly associates with Golgi non-clathrin-coated vesicles, which further mediate biosynthetic protein transport from the ER, via the Golgi up to the trans Golgi network. Coatomer complex is required for budding from Golgi membranes, and is essential for the retrograde Golgi-to-ER transport of dilysine-tagged proteins. In mammals, the coatomer can only be recruited by membranes associated to ADP-ribosylation factors (ARFs), which are small GTP-binding proteins; the complex also influences the Golgi structural integrity, as well as the processing, activity, and endocytic recycling of LDL receptors. This chain is Coatomer subunit delta (ARCN1), found in Bos taurus (Bovine).